Consider the following 446-residue polypeptide: METRGRRRAFSHQQDEPEENPGKRPTRSAPLYRHRNQPNANPATLERHYPCSTGRPPTGTVQPKPSQPPQPRSLLDRDAIDHITELWDRLYLLRQSLEKMTMADGLKPLKHFRSLEELLSLGGERLLQDLVKENQHVRSMMNEVTPLLREDGSCISLNYQLQPVIGVIYGPTGCGKSQLLRNLLSTQLINPPPETVFFIAPQVDMIPPSEIKAWEMQICEGNYAPGPEGTIIPQSGTLLPRFIKMAYDELTLEQNYDVSHPDNIFAKAASQGPIAIIMDECMENLGGHKGVSKFFHAFPSKLHDKFPKCTGYTVLVVLHNMNPRRDLGGNIANLKIQAKMHLISPRMHPSQLNRFVNTFTKGLPLAISLLLKDIFQFHAQKPCYDWIIYNTTPEHDALQWSYLHPRDGLMPMYLNIQAHLYRVLENIHKVLNDRDRWSRAYRKRNK.

Residues 1–10 show a composition bias toward basic residues; sequence METRGRRRAF. Residues 1–74 are disordered; it reads METRGRRRAF…PSQPPQPRSL (74 aa). Residue 170–177 coordinates ATP; that stretch reads GPTGCGKS. The DNA-binding stretch occupies residues 439–446; sequence RAYRKRNK.

The protein belongs to the adenoviridae packaging protein 1 family. In terms of assembly, homodimer. Part of a genome packaging complex composed of packaging proteins 1, 2 and 3; this complex specifically binds to the packaging sequence on the left end of viral genomic DNA and performs packaging of the viral genome. Interacts with protein 33K.

The protein resides in the virion. It localises to the host nucleus. Its subcellular location is the host nucleoplasm. It is found in the host nucleolus. In terms of biological role, component of the packaging machinery which encapsidates the viral DNA into preformed capsids and transcriptional activator of the viral major late promoter (MLP). Binds, along with packaging proteins 2 and 3, to the specific packaging sequence on the left end of viral genomic DNA and displays ATPase activity thereby providing the power stroke of the packaging machinery. The activity of packaging protein IVa2 is stimulated by protein 33K which acts as a terminase. May be the protein that pumps DNA into the capsid powered by ATP hydrolysis. Specifically binds to the 5'-CG-3' nucleotides of the repeats making up the packaging sequence. Component of the DEF-A and DEF-B transcription factors that bind downstream elements of the major late promoter (MLP), and stimulate transcription from the MLP after initiation of viral DNA replication. DEF-A is a heterodimer packaging proteins 1 and 2 and DEF-B is a homodimer of packaging protein 1. The protein is Packaging protein 1 of Human adenovirus F serotype 40 (HAdV-40).